Consider the following 361-residue polypeptide: D-alanine--D-alanine ligase (361 aa).

Positions 134 to 344 constitute an ATP-grasp domain; sequence KLLLKSFDIP…FKDLVDNLID (211 aa). 167 to 222 provides a ligand contact to ATP; it reads KEVLGYPVIVKPAVLGSSIGINVAYSENQIESFIKEALKYDLTIVIEKFIEAREIE. Mg(2+) contacts are provided by Asp-297, Glu-311, and Asn-313.

Belongs to the D-alanine--D-alanine ligase family. Mg(2+) is required as a cofactor. Requires Mn(2+) as cofactor.

It is found in the cytoplasm. It carries out the reaction 2 D-alanine + ATP = D-alanyl-D-alanine + ADP + phosphate + H(+). The protein operates within cell wall biogenesis; peptidoglycan biosynthesis. Cell wall formation. This is D-alanine--D-alanine ligase from Borreliella burgdorferi (strain ZS7) (Borrelia burgdorferi).